Consider the following 239-residue polypeptide: tRNA (guanine-N(7)-)-methyltransferase (239 aa).

S-adenosyl-L-methionine-binding residues include E68, E93, D120, and D143. Residue D143 is part of the active site. Substrate contacts are provided by residues K147, D180, and 217–220 (TKFE).

Belongs to the class I-like SAM-binding methyltransferase superfamily. TrmB family.

It catalyses the reaction guanosine(46) in tRNA + S-adenosyl-L-methionine = N(7)-methylguanosine(46) in tRNA + S-adenosyl-L-homocysteine. Its pathway is tRNA modification; N(7)-methylguanine-tRNA biosynthesis. Functionally, catalyzes the formation of N(7)-methylguanine at position 46 (m7G46) in tRNA. This is tRNA (guanine-N(7)-)-methyltransferase from Vibrio cholerae serotype O1 (strain ATCC 39315 / El Tor Inaba N16961).